A 77-amino-acid chain; its full sequence is uncharacterized protein (77 aa).

This is an uncharacterized protein from Vaccinia virus (strain Copenhagen) (VACV).